The following is a 178-amino-acid chain: Probable DNA-directed RNA polymerase subunit delta (178 aa).

The HTH HARE-type domain maps to 14-81; the sequence is LSLIDVAHFI…GNNTWGLRAW (68 aa). Disordered regions lie at residues 88–122 and 141–178; these read DEEVQTQTTPKKKRKSDDDEDEDEEILDDDVDYDD and LDEDEDDDDHLPDGIEGDLATVEDDYTDGDYTEDPEDK. 3 stretches are compositionally biased toward acidic residues: residues 105-122, 141-150, and 161-178; these read DDEDEDEEILDDDVDYDD, LDEDEDDDDH, and TVEDDYTDGDYTEDPEDK.

Belongs to the RpoE family. RNAP is composed of a core of 2 alpha, a beta and a beta' subunits. The core is associated with a delta subunit and one of several sigma factors.

Functionally, participates in both the initiation and recycling phases of transcription. In the presence of the delta subunit, RNAP displays an increased specificity of transcription, a decreased affinity for nucleic acids, and an increased efficiency of RNA synthesis because of enhanced recycling. This is Probable DNA-directed RNA polymerase subunit delta from Listeria monocytogenes serovar 1/2a (strain ATCC BAA-679 / EGD-e).